Here is a 2049-residue protein sequence, read N- to C-terminus: Kinetochore-associated protein rod-1 (2049 aa).

In terms of assembly, component of the RZZ complex composed of rod-1, czw-1 and zwl-1. Interacts (via N-terminus) with NDC80 complex component ndc-80.

It is found in the chromosome. Its subcellular location is the centromere. The protein localises to the kinetochore. The protein resides in the cytoplasm. It localises to the cytoskeleton. It is found in the spindle. Functionally, essential component of the mitotic checkpoint, which prevents cells from prematurely exiting mitosis. Required for chromosome segregation, the assembly of the dynein-dynactin and mdf-1-mdf-2 complexes onto kinetochores and spindle pole separation. Plays a role in nuclear envelope breakdown. Its function related to the spindle assembly machinery and kinetochore-microtubule attachments likely depends on its association in the mitotic RZZ complex. The RZZ complex recruits the spindly-like protein spdl-1 to kinetochores. To prevent irregular chromosome segregation, the complex also inhibits the attachment of the kinetochore-associated NDC80 complex to microtubules. The recruitment of spdl-1 to kinetochores relieves this inhibition. Required for embryonic development. This is Kinetochore-associated protein rod-1 from Caenorhabditis elegans.